A 183-amino-acid chain; its full sequence is Alkyl hydroperoxide reductase AhpD (183 aa).

Cys132 acts as the Proton donor in catalysis. The cysteines at positions 132 and 135 are disulfide-linked. Residue Cys135 is the Cysteine sulfenic acid (-SOH) intermediate of the active site.

The protein belongs to the AhpD family.

It catalyses the reaction N(6)-[(R)-dihydrolipoyl]-L-lysyl-[lipoyl-carrier protein] + a hydroperoxide = N(6)-[(R)-lipoyl]-L-lysyl-[lipoyl-carrier protein] + an alcohol + H2O. In terms of biological role, antioxidant protein with alkyl hydroperoxidase activity. Required for the reduction of the AhpC active site cysteine residues and for the regeneration of the AhpC enzyme activity. This chain is Alkyl hydroperoxide reductase AhpD, found in Caulobacter vibrioides (strain ATCC 19089 / CIP 103742 / CB 15) (Caulobacter crescentus).